Consider the following 358-residue polypeptide: Neutral protease 2 homolog MGYG_02351 (358 aa).

Positions 1 to 17 are cleaved as a signal peptide; sequence MQFVALLAALGAPLALA. The propeptide occupies 18 to 183; sequence ASIPAAHNNS…DSPAGVIDKR (166 aa). Disulfide bonds link cysteine 191–cysteine 260 and cysteine 267–cysteine 285. Residue histidine 309 participates in Zn(2+) binding. Glutamate 310 is a catalytic residue. Histidine 313 and aspartate 324 together coordinate Zn(2+).

This sequence belongs to the peptidase M35 family. The cofactor is Zn(2+).

Its subcellular location is the secreted. The enzyme catalyses Preferential cleavage of bonds with hydrophobic residues in P1'. Also 3-Asn-|-Gln-4 and 8-Gly-|-Ser-9 bonds in insulin B chain.. Functionally, secreted metalloproteinase that allows assimilation of proteinaceous substrates. Shows high activities on basic nuclear substrates such as histone and protamine. May be involved in virulence. The chain is Neutral protease 2 homolog MGYG_02351 from Arthroderma gypseum (strain ATCC MYA-4604 / CBS 118893) (Microsporum gypseum).